We begin with the raw amino-acid sequence, 301 residues long: Probable alpha-L-glutamate ligase 1 (301 aa).

The ATP-grasp domain occupies 104–287; that stretch reads LQLLSRKGIG…VTEPIVEYIE (184 aa). ATP is bound by residues Lys-141, 178-179, Asp-187, and 211-213; these read EY and RSN. Mg(2+) is bound by residues Asp-248, Glu-260, and Asn-262. Mn(2+) contacts are provided by Asp-248, Glu-260, and Asn-262.

It belongs to the RimK family. The cofactor is Mg(2+). Requires Mn(2+) as cofactor.

This is Probable alpha-L-glutamate ligase 1 from Shewanella sp. (strain W3-18-1).